We begin with the raw amino-acid sequence, 915 residues long: DNA (cytosine-5)-methyltransferase 3 (915 aa).

Over residues 1-14 (MAPSSPSSARPTRA) the composition is skewed to low complexity. Disordered stretches follow at residues 1–107 (MAPS…AEEQ) and 152–171 (HSNW…PEED). Residues 21–30 (AMAEEIHQNQ) are compositionally biased toward basic and acidic residues. Over residues 42–57 (AKRRRKAASSGKKPKP) the composition is skewed to basic residues. A compositionally biased stretch (basic and acidic residues) spans 71-80 (KKGETEKTEP). Residues 81–107 (VVDDVCAEEPDEEELAMGEEEAEAEEQ) are compositionally biased toward acidic residues. The region spanning 188–313 (IVYCLGDDVY…VAYSTFANIS (126 aa)) is the BAH domain. A compositionally biased stretch (polar residues) spans 315–328 (ENGQSGSETASGIS). Positions 315–338 (ENGQSGSETASGISSDDAGLETSS) are disordered. Residues 345–876 (ATLLDLYSGC…YCLGQAYLGE (532 aa)) enclose the SAM-dependent MTase C5-type domain. Residues 445 to 508 (FVVQKLIGIR…EGRKRKILPL (64 aa)) form the Chromo domain. Residue cysteine 521 is part of the active site.

This sequence belongs to the class I-like SAM-binding methyltransferase superfamily. C5-methyltransferase family.

The protein localises to the nucleus. The enzyme catalyses a 2'-deoxycytidine in DNA + S-adenosyl-L-methionine = a 5-methyl-2'-deoxycytidine in DNA + S-adenosyl-L-homocysteine + H(+). In terms of biological role, may be involved in the CpXpG methylation and in gene silencing. This chain is DNA (cytosine-5)-methyltransferase 3 (DMT105), found in Zea mays (Maize).